Reading from the N-terminus, the 308-residue chain is Aspartate carbamoyltransferase catalytic subunit (308 aa).

Carbamoyl phosphate contacts are provided by R58 and T59. K86 is a binding site for L-aspartate. Carbamoyl phosphate-binding residues include R108, H136, and Q139. L-aspartate contacts are provided by R169 and R227. Residues G268 and P269 each contribute to the carbamoyl phosphate site.

The protein belongs to the aspartate/ornithine carbamoyltransferase superfamily. ATCase family. In terms of assembly, heterododecamer (2C3:3R2) of six catalytic PyrB chains organized as two trimers (C3), and six regulatory PyrI chains organized as three dimers (R2).

It catalyses the reaction carbamoyl phosphate + L-aspartate = N-carbamoyl-L-aspartate + phosphate + H(+). It functions in the pathway pyrimidine metabolism; UMP biosynthesis via de novo pathway; (S)-dihydroorotate from bicarbonate: step 2/3. Catalyzes the condensation of carbamoyl phosphate and aspartate to form carbamoyl aspartate and inorganic phosphate, the committed step in the de novo pyrimidine nucleotide biosynthesis pathway. This is Aspartate carbamoyltransferase catalytic subunit from Chloroflexus aurantiacus (strain ATCC 29366 / DSM 635 / J-10-fl).